We begin with the raw amino-acid sequence, 80 residues long: Exodeoxyribonuclease 7 small subunit (80 aa).

The protein belongs to the XseB family. As to quaternary structure, heterooligomer composed of large and small subunits.

The protein localises to the cytoplasm. The enzyme catalyses Exonucleolytic cleavage in either 5'- to 3'- or 3'- to 5'-direction to yield nucleoside 5'-phosphates.. In terms of biological role, bidirectionally degrades single-stranded DNA into large acid-insoluble oligonucleotides, which are then degraded further into small acid-soluble oligonucleotides. The sequence is that of Exodeoxyribonuclease 7 small subunit from Pseudomonas putida (strain GB-1).